Reading from the N-terminus, the 90-residue chain is Phenol 2-monooxygenase, stimulatory component DmpM (90 aa).

The protein belongs to the TmoD/XamoD family. As to quaternary structure, active as a monomer. Formation of dimers inactivates the protein. The multicomponent enzyme phenol hydroxylase is formed by DmpL (P1 component), DmpM (P2 component), DmpN (P3 component), DmpO (P4 component) and DmpP (P5 component).

It carries out the reaction phenol + NADH + O2 + H(+) = catechol + NAD(+) + H2O. The protein operates within aromatic compound metabolism; phenol degradation. In terms of biological role, part of a multicomponent enzyme which catalyzes the degradation of phenol and some of its methylated derivatives. DmpM is a regulatory subunit that stimulates the phenol hydroxylase activity of the complex. The steady-state rate of phenol hydroxylase turnover is dependent on the DmpM concentration, with a maximum observed rate at about 1.5 DmpM per oxygenase monomer. Higher concentrations of DmpM inhibit phenol hydroxylase activity. May act by altering the redox potential of the oxygenase. Required for growth on phenol and for in vitro phenol hydroxylase activity. The sequence is that of Phenol 2-monooxygenase, stimulatory component DmpM from Pseudomonas sp. (strain CF600).